The chain runs to 642 residues: Threonine--tRNA ligase (642 aa).

The TGS domain occupies 1 to 61 (MPVITLPDGS…ETDATLSIIT (61 aa)). Positions 243 to 534 (DHRKIGKQLD…LTEETAGYFP (292 aa)) are catalytic. 3 residues coordinate Zn(2+): cysteine 334, histidine 385, and histidine 511.

This sequence belongs to the class-II aminoacyl-tRNA synthetase family. Homodimer. Zn(2+) serves as cofactor.

Its subcellular location is the cytoplasm. It catalyses the reaction tRNA(Thr) + L-threonine + ATP = L-threonyl-tRNA(Thr) + AMP + diphosphate + H(+). Its function is as follows. Catalyzes the attachment of threonine to tRNA(Thr) in a two-step reaction: L-threonine is first activated by ATP to form Thr-AMP and then transferred to the acceptor end of tRNA(Thr). Also edits incorrectly charged L-seryl-tRNA(Thr). The polypeptide is Threonine--tRNA ligase (Tolumonas auensis (strain DSM 9187 / NBRC 110442 / TA 4)).